The chain runs to 155 residues: Putative pre-16S rRNA nuclease (155 aa).

Belongs to the YqgF nuclease family.

The protein localises to the cytoplasm. Could be a nuclease involved in processing of the 5'-end of pre-16S rRNA. The sequence is that of Putative pre-16S rRNA nuclease from Novosphingobium aromaticivorans (strain ATCC 700278 / DSM 12444 / CCUG 56034 / CIP 105152 / NBRC 16084 / F199).